The sequence spans 444 residues: Phosphoglucosamine mutase (444 aa).

S102 functions as the Phosphoserine intermediate in the catalytic mechanism. Residues S102, D241, D243, and D245 each contribute to the Mg(2+) site. S102 is subject to Phosphoserine.

This sequence belongs to the phosphohexose mutase family. Mg(2+) is required as a cofactor. Activated by phosphorylation.

It catalyses the reaction alpha-D-glucosamine 1-phosphate = D-glucosamine 6-phosphate. Catalyzes the conversion of glucosamine-6-phosphate to glucosamine-1-phosphate. The polypeptide is Phosphoglucosamine mutase (Mannheimia succiniciproducens (strain KCTC 0769BP / MBEL55E)).